The chain runs to 62 residues: DNA-directed RNA polymerase subunit Rpo10 (62 aa).

Residues cysteine 6, cysteine 9, cysteine 43, and cysteine 44 each coordinate Zn(2+).

Belongs to the archaeal Rpo10/eukaryotic RPB10 RNA polymerase subunit family. In terms of assembly, part of the RNA polymerase complex. It depends on Zn(2+) as a cofactor.

The protein resides in the cytoplasm. It carries out the reaction RNA(n) + a ribonucleoside 5'-triphosphate = RNA(n+1) + diphosphate. In terms of biological role, DNA-dependent RNA polymerase (RNAP) catalyzes the transcription of DNA into RNA using the four ribonucleoside triphosphates as substrates. This is DNA-directed RNA polymerase subunit Rpo10 from Methanosarcina mazei (strain ATCC BAA-159 / DSM 3647 / Goe1 / Go1 / JCM 11833 / OCM 88) (Methanosarcina frisia).